We begin with the raw amino-acid sequence, 556 residues long: Cytochrome P450 monooxygenase polC (556 aa).

A helical membrane pass occupies residues L17–Y37. Heme is bound at residue C479.

It belongs to the cytochrome P450 family. Heme serves as cofactor.

Its subcellular location is the membrane. The enzyme catalyses motiol + 3 reduced [NADPH--hemoprotein reductase] + 3 O2 = 4beta-carboxyl motiol + 3 oxidized [NADPH--hemoprotein reductase] + 4 H2O + 4 H(+). It participates in secondary metabolite biosynthesis; terpenoid biosynthesis. In terms of biological role, cytochrome P450 monooxygenase; part of the gene cluster that mediates the biosynthesis of antifungal fernane-type triterpenoid polytolypin. PolC uses motiol as a substrate and converts the methyl group at position C-4 to a carboxyl group. Within the pathway, the triterpene cyclase polA first catalyzes the cyclization of 2,3-oxidosqualene to motiol, polC converts the 4-alpha-methyl group of motiol to a carboxyl group, polB is responsible for appending a hydroxyl group at the 2-alpha position and polE is a dual functional P450, which can catalyze the formation of both the 1-beta-hydroxyl group and 10-beta-carboxyl group. This Polytolypa hystricis (strain UAMH7299) protein is Cytochrome P450 monooxygenase polC.